Here is a 105-residue protein sequence, read N- to C-terminus: Large ribosomal subunit protein uL24 (105 aa).

Belongs to the universal ribosomal protein uL24 family. Part of the 50S ribosomal subunit.

Its function is as follows. One of two assembly initiator proteins, it binds directly to the 5'-end of the 23S rRNA, where it nucleates assembly of the 50S subunit. One of the proteins that surrounds the polypeptide exit tunnel on the outside of the subunit. The sequence is that of Large ribosomal subunit protein uL24 from Psychrobacter cryohalolentis (strain ATCC BAA-1226 / DSM 17306 / VKM B-2378 / K5).